The chain runs to 149 residues: 3-dehydroquinate dehydratase (149 aa).

Tyr-26 (proton acceptor) is an active-site residue. 3 residues coordinate substrate: Asn-77, His-83, and Asp-90. The active-site Proton donor is the His-103. Substrate is bound by residues 104–105 and Arg-114; that span reads LS.

This sequence belongs to the type-II 3-dehydroquinase family. As to quaternary structure, homododecamer.

It carries out the reaction 3-dehydroquinate = 3-dehydroshikimate + H2O. The protein operates within metabolic intermediate biosynthesis; chorismate biosynthesis; chorismate from D-erythrose 4-phosphate and phosphoenolpyruvate: step 3/7. In terms of biological role, catalyzes a trans-dehydration via an enolate intermediate. The protein is 3-dehydroquinate dehydratase of Haemophilus influenzae (strain PittEE).